Reading from the N-terminus, the 412-residue chain is Sulfhydrogenase 2 subunit alpha (412 aa).

Positions 60, 63, 402, and 405 each coordinate Ni(2+). C63 contacts Fe cation. C405 serves as a coordination point for Fe cation.

This sequence belongs to the [NiFe]/[NiFeSe] hydrogenase large subunit family. As to quaternary structure, dimer of heterotetramer of alpha, beta, gamma and delta subunits. The nickel-containing alpha and delta subunits constitute the hydrogenase activity. The beta and gamma subunits (flavin-containing dimer) constitute the sulfur reductase activity. Ni(2+) serves as cofactor. Fe cation is required as a cofactor.

The protein resides in the cytoplasm. It carries out the reaction H2 + NADP(+) = NADPH + H(+). It catalyses the reaction H2 + NAD(+) = NADH + H(+). Its function is as follows. Part of a bifunctional enzyme complex that functions as a hydrogen-evolving hydrogenase with sulfur-reducing activity. May play a role in hydrogen cycling during fermentative growth. Activity exhibited with NAD in addition to NADPH. The alpha and delta subunits form the hydrogenase component that catalyzes the reduction of protons to evolve hydrogen. The sequence is that of Sulfhydrogenase 2 subunit alpha from Pyrococcus furiosus (strain ATCC 43587 / DSM 3638 / JCM 8422 / Vc1).